The sequence spans 299 residues: MTATRKSTRPSKPLKATLVAYAKLMRLDRPIGIYLVLWPTLWSLWIAADGLPDWDVLVIFVLGVVLMRSAGCVINDFADRKIDGHVRRTANRPLVTGLITPKQAVLFFVALLVIAFILVLFTNPLTIKLSFGGALLAFCYPFMKRYTQLPQIVLGAAFAWSIPMAFAAQTNQLPEAIWVLYTAVVLWTVAYDTFYAMADREDDLKIGVKSTAILFGDQDRIITACLQLMALVAMAMAGERFGLGFSFKVSLLVAGGLFAYQQYLIRNREPNACFRAFLHNNWVGLVVFLGILVDKLITN.

The next 7 helical transmembrane spans lie at 31–51, 54–74, 105–125, 148–168, 177–197, 241–261, and 277–297; these read IGIY…ADGL, WDVL…GCVI, VLFF…TNPL, QLPQ…AFAA, IWVL…FYAM, FGLG…FAYQ, and FLHN…DKLI.

The protein belongs to the UbiA prenyltransferase family. Mg(2+) serves as cofactor.

The protein resides in the cell inner membrane. The enzyme catalyses all-trans-octaprenyl diphosphate + 4-hydroxybenzoate = 4-hydroxy-3-(all-trans-octaprenyl)benzoate + diphosphate. Its pathway is cofactor biosynthesis; ubiquinone biosynthesis. Functionally, catalyzes the prenylation of para-hydroxybenzoate (PHB) with an all-trans polyprenyl group. Mediates the second step in the final reaction sequence of ubiquinone-8 (UQ-8) biosynthesis, which is the condensation of the polyisoprenoid side chain with PHB, generating the first membrane-bound Q intermediate 3-octaprenyl-4-hydroxybenzoate. The protein is 4-hydroxybenzoate octaprenyltransferase of Saccharophagus degradans (strain 2-40 / ATCC 43961 / DSM 17024).